Here is a 336-residue protein sequence, read N- to C-terminus: Tetraacyldisaccharide 4'-kinase (336 aa).

Residue 60-67 (TIGGTGKT) participates in ATP binding.

This sequence belongs to the LpxK family.

The catalysed reaction is a lipid A disaccharide + ATP = a lipid IVA + ADP + H(+). The protein operates within glycolipid biosynthesis; lipid IV(A) biosynthesis; lipid IV(A) from (3R)-3-hydroxytetradecanoyl-[acyl-carrier-protein] and UDP-N-acetyl-alpha-D-glucosamine: step 6/6. Transfers the gamma-phosphate of ATP to the 4'-position of a tetraacyldisaccharide 1-phosphate intermediate (termed DS-1-P) to form tetraacyldisaccharide 1,4'-bis-phosphate (lipid IVA). This is Tetraacyldisaccharide 4'-kinase from Pseudomonas putida (strain W619).